The following is a 233-amino-acid chain: MDARQMKIEAARAALAYVESGMRLGVGTGSTAEEFVRLLAEKVAAGLVIEGVPTSERTARLCVDLGVPLKSLDELPELDLTIDGADEVDGALRLIKGGGGALLREKIVAASSQRMIVIADESKVVQTLGAFALPIEVNPFGLVSTRIQIEKTAARLGLSGALNLRQSEDGNFMTDGGHFIIDASFGRIPDAEALSIALNSIPGVVEHGLFINMATLAIIAGPSGARTLQANNT.

Residues 28 to 31 (TGST), 83 to 86 (DGAD), and 96 to 99 (KGGG) each bind substrate. The Proton acceptor role is filled by E105. K123 lines the substrate pocket.

It belongs to the ribose 5-phosphate isomerase family. As to quaternary structure, homodimer.

The enzyme catalyses aldehydo-D-ribose 5-phosphate = D-ribulose 5-phosphate. The protein operates within carbohydrate degradation; pentose phosphate pathway; D-ribose 5-phosphate from D-ribulose 5-phosphate (non-oxidative stage): step 1/1. Its function is as follows. Catalyzes the reversible conversion of ribose-5-phosphate to ribulose 5-phosphate. In Rhizobium rhizogenes (strain K84 / ATCC BAA-868) (Agrobacterium radiobacter), this protein is Ribose-5-phosphate isomerase A.